A 64-amino-acid polypeptide reads, in one-letter code: PYLa/PGLa B (64 aa).

Positions 1-20 are cleaved as a signal peptide; sequence MYKQIFLCLIIAALCATIMA. The propeptide occupies 21 to 35; it reads EASALADADDDDDKR. Leucine amide is present on L59. Positions 60-64 are excised as a propeptide; the sequence is GRRDS.

Belongs to the gastrin/cholecystokinin family. Magainin subfamily. As to expression, expressed by the skin glands. Synthesized in the stomach and stored in a novel granular multinucleated cell in the gastric mucosa. Stored as active, processed peptides in large granules within the granular gland secretions of the skin.

Its subcellular location is the secreted. In terms of biological role, PGLa and PGLa-H display a broad-spectrum of antibacterial activity against a range of Gram-positive and Gram-negative bacteria. PGLa also displays antifungal activity against C.albicans ATCC 14053. PGLa-H shows moderate antibacterial activity against the multidrug-resistant methicillin-resistant S.aureus (MRSA) but exhibits very little hemolytic activity. This Xenopus laevis (African clawed frog) protein is PYLa/PGLa B (pgla-b).